The chain runs to 721 residues: Quinolinate synthase, chloroplastic (721 aa).

A chloroplast-targeting transit peptide spans 1 to 67 (MDAANLVMKS…KIPSNNSTFT (67 aa)). Catalysis depends on Cys-133, which acts as the Cysteine persulfide intermediate. Positions 283 and 309 each coordinate iminosuccinate. Position 363 (Cys-363) interacts with [4Fe-4S] cluster. Residues 392–394 (YIN) and Ser-414 contribute to the iminosuccinate site. Cys-487 provides a ligand contact to [4Fe-4S] cluster. Residues 513 to 515 (HFE) and Thr-538 contribute to the iminosuccinate site. Cys-643 lines the [4Fe-4S] cluster pocket.

This sequence belongs to the quinolinate synthase family. Type 1 subfamily. As to quaternary structure, homodimer. It depends on [4Fe-4S] cluster as a cofactor.

The protein resides in the plastid. It localises to the chloroplast. It carries out the reaction iminosuccinate + dihydroxyacetone phosphate = quinolinate + phosphate + 2 H2O + H(+). Its pathway is alkaloid biosynthesis; nicotine biosynthesis. It participates in cofactor biosynthesis; NAD(+) biosynthesis; quinolinate from iminoaspartate: step 1/1. Involved in the biosynthesis of pyridine alkaloid natural products, leading mainly to the production of anabasine, anatabine, nicotine and nornicotine, effective deterrents against herbivores with antiparasitic and pesticide properties (neurotoxins); nornicotine serves as the precursor in the synthesis of the carcinogen compound N'-nitrosonornicotine (NNN). Catalyzes the condensation of iminoaspartate with dihydroxyacetone phosphate to form quinolinate. The sequence is that of Quinolinate synthase, chloroplastic from Nicotiana tabacum (Common tobacco).